We begin with the raw amino-acid sequence, 231 residues long: L-ribulose-5-phosphate 4-epimerase AraD (231 aa).

Residues 27–28, 44–45, and 74–75 each bind substrate; these read GN, SG, and SS. Positions 76, 95, and 97 each coordinate Zn(2+). Catalysis depends on D120, which acts as the Proton donor/acceptor. H171 contacts Zn(2+). The active-site Proton donor/acceptor is Y229.

The protein belongs to the aldolase class II family. AraD/FucA subfamily. As to quaternary structure, homotetramer. Zn(2+) is required as a cofactor.

It catalyses the reaction L-ribulose 5-phosphate = D-xylulose 5-phosphate. The protein operates within carbohydrate degradation; L-arabinose degradation via L-ribulose; D-xylulose 5-phosphate from L-arabinose (bacterial route): step 3/3. With respect to regulation, inhibited by glycolohydroxamate at concentration above 0.1 mM. Involved in the degradation of L-arabinose. Catalyzes the interconversion of L-ribulose 5-phosphate (LRu5P) and D-xylulose 5-phosphate (D-Xu5P) via a retroaldol/aldol mechanism (carbon-carbon bond cleavage analogous to a class II aldolase reaction). The sequence is that of L-ribulose-5-phosphate 4-epimerase AraD from Escherichia coli (strain K12).